Here is a 205-residue protein sequence, read N- to C-terminus: Lipoprotein MlpB (205 aa).

Positions 1-17 are cleaved as a signal peptide; sequence MKIINILFCLLLIVLNS. A lipid anchor (N-palmitoyl cysteine) is attached at C18. Residue C18 is the site of S-diacylglycerol cysteine attachment.

This sequence belongs to the Multicopy lipoprotein (Mlp) family.

It localises to the cell outer membrane. An outer membrane protein that may participate in pathogenesis. Some human Lyme disease patients have antibodies against this protein. The Mlp proteins probably undergo intragenic recombination, generating new alleles. The chain is Lipoprotein MlpB from Borreliella burgdorferi (strain ATCC 35210 / DSM 4680 / CIP 102532 / B31) (Borrelia burgdorferi).